We begin with the raw amino-acid sequence, 466 residues long: Light-independent protochlorophyllide reductase subunit N (466 aa).

Cys-24, Cys-49, and Cys-109 together coordinate [4Fe-4S] cluster.

Belongs to the BchN/ChlN family. Protochlorophyllide reductase is composed of three subunits; ChlL, ChlN and ChlB. Forms a heterotetramer of two ChlB and two ChlN subunits. [4Fe-4S] cluster serves as cofactor.

The enzyme catalyses chlorophyllide a + oxidized 2[4Fe-4S]-[ferredoxin] + 2 ADP + 2 phosphate = protochlorophyllide a + reduced 2[4Fe-4S]-[ferredoxin] + 2 ATP + 2 H2O. It functions in the pathway porphyrin-containing compound metabolism; chlorophyll biosynthesis (light-independent). In terms of biological role, component of the dark-operative protochlorophyllide reductase (DPOR) that uses Mg-ATP and reduced ferredoxin to reduce ring D of protochlorophyllide (Pchlide) to form chlorophyllide a (Chlide). This reaction is light-independent. The NB-protein (ChlN-ChlB) is the catalytic component of the complex. In Synechococcus sp. (strain JA-3-3Ab) (Cyanobacteria bacterium Yellowstone A-Prime), this protein is Light-independent protochlorophyllide reductase subunit N.